The primary structure comprises 439 residues: Probable E3 ubiquitin-protein ligase makorin-1 (439 aa).

3 C3H1-type zinc fingers span residues 18–45 (WTKHVTCRYFMHGLCKEGENCRYSHDLS), 48–74 (KQTMICKFFQKGCCAFGDRCRYEHTKP), and 163–190 (EMKKQLCPYAAVGECRYGLNCAYLHGDV). The disordered stretch occupies residues 73–118 (KPSKQDEVPSSKPSMPLTAAPLAGTPEPVSDGPGGTTGAQEKPQGS). Positions 191–218 (CDMCGLQVLHPSDTSQRSQHIRACIEAH) are makorin-type Cys-His. The segment at 236-290 (CGVCMEVVFEKTNPSERRFGILSNCCHCYCLKCIRKWRSAKQFESKIIKSCPECR) adopts an RING-type zinc-finger fold. A C3H1-type 4 zinc finger spans residues 319 to 348 (GMGTKPCRYFDEGRGTCPFGANCFYKHAFP). Positions 352–371 (LEEPQPQRRQNGSNGRNRNT) are disordered. The segment covering 358–368 (QRRQNGSNGRN) has biased composition (low complexity).

It carries out the reaction S-ubiquitinyl-[E2 ubiquitin-conjugating enzyme]-L-cysteine + [acceptor protein]-L-lysine = [E2 ubiquitin-conjugating enzyme]-L-cysteine + N(6)-ubiquitinyl-[acceptor protein]-L-lysine.. It participates in protein modification; protein ubiquitination. In terms of biological role, E3 ubiquitin ligase catalyzing the covalent attachment of ubiquitin moieties onto substrate proteins. The sequence is that of Probable E3 ubiquitin-protein ligase makorin-1 from Danio rerio (Zebrafish).